Consider the following 417-residue polypeptide: Riboflavin biosynthesis protein RibBA (417 aa).

Positions 1-204 (MTRFDSIERA…IADLIAWRRK (204 aa)) are DHBP synthase. Residues 28-29 (RE), D33, 141-145 (RPGHT), and E165 contribute to the D-ribulose 5-phosphate site. E29 contacts Mg(2+). Residue H144 coordinates Mg(2+). Residues 205–417 (HEKHVERVAS…LDDFEAGEML (213 aa)) are GTP cyclohydrolase II. A GTP-binding site is contributed by 259-263 (RVHSE). C264, C275, and C277 together coordinate Zn(2+). GTP is bound by residues Q280, 303–305 (EGR), and T325. Catalysis depends on D337, which acts as the Proton acceptor; for GTP cyclohydrolase activity. Residue R339 is the Nucleophile; for GTP cyclohydrolase activity of the active site. 2 residues coordinate GTP: T360 and K365.

The protein in the N-terminal section; belongs to the DHBP synthase family. It in the C-terminal section; belongs to the GTP cyclohydrolase II family. Mg(2+) serves as cofactor. Requires Mn(2+) as cofactor. Zn(2+) is required as a cofactor.

It carries out the reaction D-ribulose 5-phosphate = (2S)-2-hydroxy-3-oxobutyl phosphate + formate + H(+). The catalysed reaction is GTP + 4 H2O = 2,5-diamino-6-hydroxy-4-(5-phosphoribosylamino)-pyrimidine + formate + 2 phosphate + 3 H(+). The protein operates within cofactor biosynthesis; riboflavin biosynthesis; 2-hydroxy-3-oxobutyl phosphate from D-ribulose 5-phosphate: step 1/1. It functions in the pathway cofactor biosynthesis; riboflavin biosynthesis; 5-amino-6-(D-ribitylamino)uracil from GTP: step 1/4. Catalyzes the conversion of D-ribulose 5-phosphate to formate and 3,4-dihydroxy-2-butanone 4-phosphate. In terms of biological role, catalyzes the conversion of GTP to 2,5-diamino-6-ribosylamino-4(3H)-pyrimidinone 5'-phosphate (DARP), formate and pyrophosphate. This Rhodococcus jostii (strain RHA1) protein is Riboflavin biosynthesis protein RibBA.